Consider the following 375-residue polypeptide: Queuine tRNA-ribosyltransferase (375 aa).

Aspartate 89 acts as the Proton acceptor in catalysis. Residues 89-93 (DSGGF), aspartate 143, glutamine 187, and glycine 214 each bind substrate. The segment at 245-251 (GVGKPED) is RNA binding. The active-site Nucleophile is the aspartate 264. Residues 269–273 (TRNAR) form an RNA binding; important for wobble base 34 recognition region. Residues cysteine 302, cysteine 304, cysteine 307, and histidine 333 each contribute to the Zn(2+) site.

Belongs to the queuine tRNA-ribosyltransferase family. In terms of assembly, homodimer. Within each dimer, one monomer is responsible for RNA recognition and catalysis, while the other monomer binds to the replacement base PreQ1. Zn(2+) serves as cofactor.

The catalysed reaction is 7-aminomethyl-7-carbaguanine + guanosine(34) in tRNA = 7-aminomethyl-7-carbaguanosine(34) in tRNA + guanine. The protein operates within tRNA modification; tRNA-queuosine biosynthesis. Catalyzes the base-exchange of a guanine (G) residue with the queuine precursor 7-aminomethyl-7-deazaguanine (PreQ1) at position 34 (anticodon wobble position) in tRNAs with GU(N) anticodons (tRNA-Asp, -Asn, -His and -Tyr). Catalysis occurs through a double-displacement mechanism. The nucleophile active site attacks the C1' of nucleotide 34 to detach the guanine base from the RNA, forming a covalent enzyme-RNA intermediate. The proton acceptor active site deprotonates the incoming PreQ1, allowing a nucleophilic attack on the C1' of the ribose to form the product. After dissociation, two additional enzymatic reactions on the tRNA convert PreQ1 to queuine (Q), resulting in the hypermodified nucleoside queuosine (7-(((4,5-cis-dihydroxy-2-cyclopenten-1-yl)amino)methyl)-7-deazaguanosine). This is Queuine tRNA-ribosyltransferase from Enterobacter sp. (strain 638).